A 780-amino-acid polypeptide reads, in one-letter code: Translation initiation factor IF-2 (780 aa).

Positions 24-194 (AEEKGFPVKN…KGAPERKNKA (171 aa)) are disordered. Polar residues-rich tracts occupy residues 59–71 (EQSA…QRKV) and 80–90 (QGTARTQTTAQ). Composition is skewed to low complexity over residues 98-114 (NQTQ…QTGN) and 132-158 (NNNT…SRNN). A compositionally biased stretch (basic residues) spans 159–176 (RNNRRRNNNNNNRYKKNQ). The span at 177-194 (RIKDTNQHKGAPERKNKA) shows a compositional bias: basic and acidic residues. Residues 281–450 (PRAPVVTIMG…LLQSDVLELK (170 aa)) form the tr-type G domain. The tract at residues 290–297 (GHVDHGKT) is G1. Residue 290–297 (GHVDHGKT) coordinates GTP. The G2 stretch occupies residues 315 to 319 (GITQA). The segment at 336–339 (DTPG) is G3. Residues 336 to 340 (DTPGH) and 390 to 393 (NKID) each bind GTP. The segment at 390-393 (NKID) is G4. The interval 426–428 (SAK) is G5.

The protein belongs to the TRAFAC class translation factor GTPase superfamily. Classic translation factor GTPase family. IF-2 subfamily.

The protein resides in the cytoplasm. In terms of biological role, one of the essential components for the initiation of protein synthesis. Protects formylmethionyl-tRNA from spontaneous hydrolysis and promotes its binding to the 30S ribosomal subunits. Also involved in the hydrolysis of GTP during the formation of the 70S ribosomal complex. This Levilactobacillus brevis (strain ATCC 367 / BCRC 12310 / CIP 105137 / JCM 1170 / LMG 11437 / NCIMB 947 / NCTC 947) (Lactobacillus brevis) protein is Translation initiation factor IF-2.